The primary structure comprises 589 residues: Serine/threonine-protein kinase PknJ (589 aa).

Topologically, residues Met-1–Arg-342 are cytoplasmic. A Protein kinase domain is found at Tyr-14–Ala-276. Residues Leu-20–Val-28 and Lys-43 each bind ATP. Asp-136 serves as the catalytic Proton acceptor. A helical transmembrane segment spans residues Gly-343 to Met-363. At Thr-364–Gly-589 the chain is on the extracellular side. The span at Ser-365–Thr-387 shows a compositional bias: low complexity. Residues Ser-365–Pro-400 are disordered.

It belongs to the protein kinase superfamily. Ser/Thr protein kinase family. As to quaternary structure, homodimer.

The protein resides in the cell membrane. It catalyses the reaction L-seryl-[protein] + ATP = O-phospho-L-seryl-[protein] + ADP + H(+). It carries out the reaction L-threonyl-[protein] + ATP = O-phospho-L-threonyl-[protein] + ADP + H(+). This chain is Serine/threonine-protein kinase PknJ (pknJ), found in Mycobacterium bovis (strain ATCC BAA-935 / AF2122/97).